Here is a 225-residue protein sequence, read N- to C-terminus: Small ribosomal subunit protein uS2 (225 aa).

The segment covering 1 to 13 (MAEAKPALEKEAA) has biased composition (basic and acidic residues). Positions 1-33 (MAEAKPALEKEAAVKTGSIPSESEDETASHKEG) are disordered.

The protein belongs to the universal ribosomal protein uS2 family.

The chain is Small ribosomal subunit protein uS2 from Methanosarcina acetivorans (strain ATCC 35395 / DSM 2834 / JCM 12185 / C2A).